A 380-amino-acid polypeptide reads, in one-letter code: Cytochrome b (380 aa).

A run of 4 helical transmembrane segments spans residues phenylalanine 34 to methionine 54, tryptophan 78 to glycine 100, threonine 113 to valine 133, and phenylalanine 179 to leucine 199. The heme b site is built by histidine 84 and histidine 98. Histidine 183 and histidine 197 together coordinate heme b. Histidine 202 is a binding site for a ubiquinone. The next 4 helical transmembrane spans lie at phenylalanine 225–leucine 245, leucine 289–histidine 309, valine 324–valine 344, and isoleucine 349–isoleucine 369.

The protein belongs to the cytochrome b family. In terms of assembly, the main subunits of complex b-c1 are: cytochrome b, cytochrome c1 and the Rieske protein. Heme b is required as a cofactor.

The protein localises to the mitochondrion inner membrane. Component of the ubiquinol-cytochrome c reductase complex (complex III or cytochrome b-c1 complex) that is part of the mitochondrial respiratory chain. The b-c1 complex mediates electron transfer from ubiquinol to cytochrome c. Contributes to the generation of a proton gradient across the mitochondrial membrane that is then used for ATP synthesis. In Xenoturbella bocki (Marine worm), this protein is Cytochrome b (mt:Cyt-b).